The sequence spans 66 residues: LAVQDLKKQPLQDVAKRVEEIWQEFLAPGAPSAINLDSHSYEITSQNVKDGGRYTFEDAQEHIYKL.

One can recognise an RGS domain in the interval 1-66 (LAVQDLKKQP…EDAQEHIYKL (66 aa)).

In terms of assembly, interacts with GNB5. Interacts with RGS7BP, leading to regulate the subcellular location of the heterodimer formed with GNB5. Interacts with GNAI1.

The protein resides in the cytoplasm. It is found in the cytosol. It localises to the membrane. Its subcellular location is the nucleus. The protein localises to the cell membrane. In terms of biological role, regulates G protein-coupled receptor signaling cascades. Inhibits signal transduction by increasing the GTPase activity of G protein alpha subunits, thereby driving them into their inactive GDP-bound form. The RGS6/GNB5 dimer enhances GNAO1 GTPase activity. The protein is Regulator of G-protein signaling 6 (Rgs6) of Rattus norvegicus (Rat).